The chain runs to 323 residues: Fructose-1,6-bisphosphatase class 1 (323 aa).

4 residues coordinate Mg(2+): glutamate 84, aspartate 103, leucine 105, and aspartate 106. Substrate is bound by residues 106–109 (DGSS), asparagine 198, and lysine 264. Glutamate 270 is a binding site for Mg(2+).

This sequence belongs to the FBPase class 1 family. Homotetramer. It depends on Mg(2+) as a cofactor.

The protein localises to the cytoplasm. The enzyme catalyses beta-D-fructose 1,6-bisphosphate + H2O = beta-D-fructose 6-phosphate + phosphate. It participates in carbohydrate biosynthesis; gluconeogenesis. This Cellvibrio japonicus (strain Ueda107) (Pseudomonas fluorescens subsp. cellulosa) protein is Fructose-1,6-bisphosphatase class 1.